The chain runs to 634 residues: DNA-directed RNA polymerase subunit gamma (634 aa).

Zn(2+)-binding residues include cysteine 74, cysteine 76, cysteine 89, and cysteine 92. Aspartate 471, aspartate 473, and aspartate 475 together coordinate Mg(2+).

Belongs to the RNA polymerase beta' chain family. RpoC1 subfamily. In cyanobacteria the RNAP catalytic core is composed of 2 alpha, 1 beta, 1 beta', 1 gamma and 1 omega subunit. When a sigma factor is associated with the core the holoenzyme is formed, which can initiate transcription. Requires Mg(2+) as cofactor. It depends on Zn(2+) as a cofactor.

The enzyme catalyses RNA(n) + a ribonucleoside 5'-triphosphate = RNA(n+1) + diphosphate. In terms of biological role, DNA-dependent RNA polymerase catalyzes the transcription of DNA into RNA using the four ribonucleoside triphosphates as substrates. This is DNA-directed RNA polymerase subunit gamma from Prochlorococcus marinus subsp. pastoris (strain CCMP1986 / NIES-2087 / MED4).